We begin with the raw amino-acid sequence, 246 residues long: 1-(5-phosphoribosyl)-5-[(5-phosphoribosylamino)methylideneamino] imidazole-4-carboxamide isomerase (246 aa).

The Proton acceptor role is filled by aspartate 8. Aspartate 131 serves as the catalytic Proton donor.

Belongs to the HisA/HisF family.

The protein resides in the cytoplasm. The catalysed reaction is 1-(5-phospho-beta-D-ribosyl)-5-[(5-phospho-beta-D-ribosylamino)methylideneamino]imidazole-4-carboxamide = 5-[(5-phospho-1-deoxy-D-ribulos-1-ylimino)methylamino]-1-(5-phospho-beta-D-ribosyl)imidazole-4-carboxamide. It participates in amino-acid biosynthesis; L-histidine biosynthesis; L-histidine from 5-phospho-alpha-D-ribose 1-diphosphate: step 4/9. This chain is 1-(5-phosphoribosyl)-5-[(5-phosphoribosylamino)methylideneamino] imidazole-4-carboxamide isomerase, found in Bordetella bronchiseptica (strain ATCC BAA-588 / NCTC 13252 / RB50) (Alcaligenes bronchisepticus).